A 2947-amino-acid chain; its full sequence is 3'-5' exoribonuclease HELZ2 (2947 aa).

Residues 85 to 114 (PMRYQVCHYYRPGLGCRRHWNRCTFARSPE) form a C3H1-type 1 zinc finger. The C2H2-type zinc finger occupies 167–187 (CFTCCPPCLCPVDPRGHCPKH). A C3H1-type 2 zinc finger spans residues 221 to 245 (YCMYVGRGVPCRHGASRCEYAHSAV). Residues 289–311 (CHACLVTCNSQEAFENHCSSLEH) form a C2H2-type; atypical zinc finger. In terms of domain architecture, UvrD-like helicase ATP-binding spans 769–1317 (VGLIAGRRPE…ELLDESQQVT (549 aa)). 790–797 (GPFGTGKT) contributes to the ATP binding site. Residues 809-1290 (QQPHTKVLIC…GGMSEEDSES (482 aa)) form an interaction with THRAP3 region. Residues 913–916 (DEAA) carry the DEAA box motif. Residues 1260–1292 (EDTASGNSASRDAAAEVSTLEGGMSEEDSESDF) form a disordered region. 4 short sequence motifs (LXXLL motif) span residues 1306-1310 (LKELL), 1348-1352 (LWKFL), 1403-1407 (LVQIL), and 2240-2244 (LEGLP). Position 2381 is an omega-N-methylarginine (Arg2381). The interval 2413-2947 (PEPCRGNWPR…RVQRKSALSS (535 aa)) is interaction with THRAP3. The UvrD-like helicase ATP-binding 2 domain occupies 2449–2726 (LNQSQDRAVR…IMLDTQYRMH (278 aa)). ATP is bound at residue 2470-2477 (GPPGTGKT). The LXXLL motif 5 signature appears at 2525–2529 (LGGLL).

The protein belongs to the DNA2/NAM7 helicase family. As to quaternary structure, interacts with PPARA (via DNA-binding domain) and PPARG; the interaction stimulates the transcriptional activity of PPARA and PPARG. Interacts with THRAP3; the interaction is direct and HELZ2 and THRAP3 synergistically enhance the transcriptional activity of PPARG. It is probably part of the peroxisome proliferator activated receptor alpha interacting complex (PRIC).

It is found in the cytoplasm. The catalysed reaction is Exonucleolytic cleavage in the 3'- to 5'-direction to yield nucleoside 5'-phosphates.. The enzyme catalyses ATP + H2O = ADP + phosphate + H(+). Its function is as follows. Can degrade highly structured RNAs through its concerted ATP-dependent RNA helicase and 3' to 5' exoribonuclease activities. Shows a strong preference for pyrimidine over purine residues for its nuclease activity. Acts as a transcriptional coactivator for a number of nuclear receptors including PPARA, PPARG, THRA, THRB and RXRA. The sequence is that of 3'-5' exoribonuclease HELZ2 (Helz2) from Mus musculus (Mouse).